The following is a 665-amino-acid chain: Intraflagellar transport protein 70A (665 aa).

TPR repeat units follow at residues 11–44, 45–78, 154–187, 189–221, 393–424, 425–457, and 459–492; these read DGEF…SPRS, RAGL…HPEL, TDGQ…SGYQ, DLSY…GIRQ, LTKQ…EKYI, PVLM…CNDH, and VWKL…HYDN. Residues 508–535 adopt a coiled-coil conformation; that stretch reads YIMTSQNEEAEELMRKIEKEEEQLSYDD. A TPR 8 repeat occupies 544–577; sequence CIVNLVIGTLYCAKGNYEFGISRVIKSLEPYNKK.

The protein belongs to the TTC30/dfy-1/fleer family.

It localises to the cell projection. The protein resides in the cilium. Functionally, required for polyglutamylation of axonemal tubulin. Plays a role in anterograde intraflagellar transport (IFT), the process by which cilia precursors are transported from the base of the cilium to the site of their incorporation at the tip. In Homo sapiens (Human), this protein is Intraflagellar transport protein 70A.